A 315-amino-acid chain; its full sequence is Vomeronasal type-1 receptor 54 (315 aa).

The Extracellular segment spans residues 1 to 15 (MNKMNRLSHNTEIRN). Residues 16–40 (AIYSGVGIGISGNSFLLLFHIFKYI) traverse the membrane as a helical segment. Over 41–51 (RGQRSRHIDLP) the chain is Cytoplasmic. A helical membrane pass occupies residues 52-71 (IGLLSLIHLVMLIAMSLVAT). Residues 72-90 (DIFMPWGRWGDTTCKCVIS) are Extracellular-facing. A disulfide bridge links C85 with C172. The helical transmembrane segment at 91–112 (LYRFCRSLSLCATSLLSILQAV) threads the bilayer. The Cytoplasmic portion of the chain corresponds to 113-132 (TLNPRNSCLEKFKRKSPHYM). A helical membrane pass occupies residues 133–154 (LGCLLFLSVFYTFISSPLATYI). Over 155-193 (TAKSNLTSPSFTYITTSCSLAPMSYSFHLTVFILLTSRD) the chain is Extracellular. The helical transmembrane segment at 194–212 (VIFVGLMLLSSGYMVTFLG) threads the bilayer. The Cytoplasmic segment spans residues 213-239 (RHKKQSQFLHITSFSLKPSAEKRAMRT). A helical transmembrane segment spans residues 240–260 (ILCLMSFFVLMYTLDSIVSYI). The Extracellular segment spans residues 261 to 267 (RSIDDGQ). A helical membrane pass occupies residues 268–288 (IFYCVHIFTAHGYATVSPFLI). Over 289 to 315 (LSTEKYIINIFRSTFGRMVTIILLRNR) the chain is Cytoplasmic.

The protein belongs to the G-protein coupled receptor 1 family.

The protein localises to the cell membrane. In terms of biological role, putative pheromone receptor implicated in the regulation of social and reproductive behavior. The protein is Vomeronasal type-1 receptor 54 (Vmn1r54) of Mus musculus (Mouse).